The following is a 359-amino-acid chain: DNA polymerase IV (359 aa).

The region spanning 4 to 184 is the UmuC domain; that stretch reads IVHVDMDAFY…LKVNRIPGVG (181 aa). Mg(2+) is bound by residues Asp-8 and Asp-102. Glu-103 is an active-site residue.

Belongs to the DNA polymerase type-Y family. As to quaternary structure, monomer. The cofactor is Mg(2+).

It localises to the cytoplasm. It carries out the reaction DNA(n) + a 2'-deoxyribonucleoside 5'-triphosphate = DNA(n+1) + diphosphate. Functionally, poorly processive, error-prone DNA polymerase involved in untargeted mutagenesis. Copies undamaged DNA at stalled replication forks, which arise in vivo from mismatched or misaligned primer ends. These misaligned primers can be extended by PolIV. Exhibits no 3'-5' exonuclease (proofreading) activity. May be involved in translesional synthesis, in conjunction with the beta clamp from PolIII. This Xanthomonas euvesicatoria pv. vesicatoria (strain 85-10) (Xanthomonas campestris pv. vesicatoria) protein is DNA polymerase IV.